A 379-amino-acid chain; its full sequence is Tryptophan--tRNA ligase, mitochondrial (379 aa).

ATP-binding positions include Q42 and 48 to 51 (HLGN). The short motif at 43-51 (PTGCFHLGN) is the 'HIGH' region element. L-tryptophan is bound at residue D184. Residues 196–198 (GDD), V235, 244–248 (KMSKS), and K247 contribute to the ATP site. The short motif at 244–248 (KMSKS) is the 'KMSKS' region element.

It belongs to the class-I aminoacyl-tRNA synthetase family. As to quaternary structure, homodimer.

Its subcellular location is the mitochondrion matrix. The enzyme catalyses tRNA(Trp) + L-tryptophan + ATP = L-tryptophyl-tRNA(Trp) + AMP + diphosphate + H(+). Mitochondrial aminoacyl-tRNA synthetase that catalyzes the attachment of tryptophan to tRNA(Trp). This is Tryptophan--tRNA ligase, mitochondrial (MSW1) from Saccharomyces cerevisiae (strain ATCC 204508 / S288c) (Baker's yeast).